The chain runs to 260 residues: ProSAAS (260 aa).

An N-terminal signal peptide occupies residues 1 to 33 (MAGSPLLCGPRAGGVGLLVLLLLGLLRLPPTLS). The proSAAS(1-180) stretch occupies residues 34–215 (ARPVKEPRSL…SSEPEAAPAP (182 aa)). Disordered stretches follow at residues 162-187 (AALRPRPPVYDDGPTGPDVEDAADET) and 206-234 (SSEPEAAPAPRRLRRAVDQDLGPEVPPEN). The C-terminal inhibitory domain; interacts with PCSK1 stretch occupies residues 221–260 (AVDQDLGPEVPPENVLGALLRVKRLENSSPQAPARRLLPP). The Sufficient for inhibition of PCSK1 signature appears at 239–244 (LLRVKR).

As to quaternary structure, interacts via the C-terminal inhibitory domain with PCSK1 65 kDa form. Proteolytically cleaved in the Golgi. Big SAAS, Little SAAS, PEN and Big LEN are the major processed peptides in proSAAS-overexpressing PC-12 phaeochromocytoma cells (lacking PCSK1 and PCSK2 endopeptidases). Peptides corresponding to PEN and a proSAAS aa 40-59 have been detected in wild-type PC-12 cells. As to expression, expressed in adult brain (all major structural regions), adrenal gland (medulla) and spinal cord (dorsal and ventral horn). Expressed in pancreatic islands.

Its subcellular location is the secreted. It localises to the golgi apparatus. It is found in the trans-Golgi network. May function in the control of the neuroendocrine secretory pathway. Proposed be a specific endogenous inhibitor of PCSK1. ProSAAS and Big PEN-LEN, both containing the C-terminal inhibitory domain, but not the processed peptides reduce PCSK1 activity in the endoplasmic reticulum and Golgi. It reduces the activity of the 87 kDa form but not the autocatalytically derived 65 kDa form of PCSK1. Subsequent processing of proSAAS may eliminate the inhibition. Slows down convertase-mediated processing of proopiomelanocortin and proenkephalin. May control the intracellular timing of PCSK1 rather than its total level of activity. Functionally, endogenous ligand for GPR171. Neuropeptide involved in the regulation of feeding. This chain is ProSAAS (Pcsk1n), found in Rattus norvegicus (Rat).